We begin with the raw amino-acid sequence, 490 residues long: Glutamyl-tRNA(Gln) amidotransferase subunit A (490 aa).

Residues lysine 78 and serine 159 each act as charge relay system in the active site. Serine 183 acts as the Acyl-ester intermediate in catalysis.

This sequence belongs to the amidase family. GatA subfamily. Heterotrimer of A, B and C subunits.

The enzyme catalyses L-glutamyl-tRNA(Gln) + L-glutamine + ATP + H2O = L-glutaminyl-tRNA(Gln) + L-glutamate + ADP + phosphate + H(+). Allows the formation of correctly charged Gln-tRNA(Gln) through the transamidation of misacylated Glu-tRNA(Gln) in organisms which lack glutaminyl-tRNA synthetase. The reaction takes place in the presence of glutamine and ATP through an activated gamma-phospho-Glu-tRNA(Gln). In Paramagnetospirillum magneticum (strain ATCC 700264 / AMB-1) (Magnetospirillum magneticum), this protein is Glutamyl-tRNA(Gln) amidotransferase subunit A.